The following is a 379-amino-acid chain: Homoserine O-succinyltransferase (379 aa).

The AB hydrolase-1 domain maps to 51 to 360; that stretch reads NAVLICHALS…DAPQGHDAFL (310 aa). Ser-157 (nucleophile) is an active-site residue. Arg-227 contacts substrate. Residues Asp-323 and His-356 contribute to the active site. Asp-357 lines the substrate pocket.

It belongs to the AB hydrolase superfamily. MetX family. As to quaternary structure, homodimer.

Its subcellular location is the cytoplasm. The catalysed reaction is L-homoserine + succinyl-CoA = O-succinyl-L-homoserine + CoA. It functions in the pathway amino-acid biosynthesis; L-methionine biosynthesis via de novo pathway; O-succinyl-L-homoserine from L-homoserine: step 1/1. Transfers a succinyl group from succinyl-CoA to L-homoserine, forming succinyl-L-homoserine. The sequence is that of Homoserine O-succinyltransferase from Pseudomonas aeruginosa (strain LESB58).